Reading from the N-terminus, the 464-residue chain is Protein FAM90A9 (464 aa).

3 disordered regions span residues 1 to 42 (MMAR…DPRL), 70 to 389 (PATL…HDGA), and 411 to 437 (APSFHSPEKPGTFLAQSPHVSEKSEAP). Basic and acidic residues-rich tracts occupy residues 74 to 89 (GKKEGKENLKPWKPRV) and 97 to 114 (NKDKGEKEERPRQQDPQR). Residues 180–197 (LASLSPLRKASLSSSSSL) show a composition bias toward low complexity.

It belongs to the FAM90 family.

The sequence is that of Protein FAM90A9 (FAM90A9) from Homo sapiens (Human).